A 362-amino-acid polypeptide reads, in one-letter code: Ribosome-binding ATPase YchF (362 aa).

Positions 3 to 255 constitute an OBG-type G domain; sequence FKCGIIGLPN…MSDEEKKSFM (253 aa). 12–17 provides a ligand contact to ATP; that stretch reads NVGKST. Mg(2+) is bound by residues Ser16 and Thr36. The TGS domain maps to 277 to 360; that stretch reads NLITFFTVGD…QDGDIIHFLF (84 aa).

This sequence belongs to the TRAFAC class OBG-HflX-like GTPase superfamily. OBG GTPase family. YchF/OLA1 subfamily. Mg(2+) is required as a cofactor.

Its function is as follows. ATPase that binds to both the 70S ribosome and the 50S ribosomal subunit in a nucleotide-independent manner. The chain is Ribosome-binding ATPase YchF from Buchnera aphidicola subsp. Acyrthosiphon pisum (strain APS) (Acyrthosiphon pisum symbiotic bacterium).